The sequence spans 885 residues: Disease resistance protein RFL1 (885 aa).

Residues 27-61 (SYIQNLSENLASLQKAMGVLNAKRDDVQGRINREE) are a coiled coil. The region spanning 141 to 443 (EAAPIAEVEE…CEGFIKEKQG (303 aa)) is the NB-ARC domain. 183–190 (GMGGVGKT) is an ATP binding site. 7 LRR repeats span residues 517-538 (AVKRMSLMNNNFEKILGSPECV), 539-561 (ELITLFLQNNYKLVDISMEFFRC), 564-586 (SLAVLDLSENHSLSELPEEISEL), 588-610 (SLQYLDLSGTYIERLPHGLHELR), 611-633 (KLVHLKLERTRRLESISGISYLS), 634-655 (SLRTLRLRDSKTTLDTGLMKEL), and 657-679 (LLEHLELITTDISSGLVGELFCY).

The protein belongs to the disease resistance NB-LRR family.

In terms of biological role, disease resistance (R) protein. The polypeptide is Disease resistance protein RFL1 (RFL1) (Arabidopsis thaliana (Mouse-ear cress)).